A 471-amino-acid polypeptide reads, in one-letter code: Ribosome biogenesis protein YTM1 (471 aa).

The segment at 10-92 is ubiquitin-like (UBL) domain; sequence VTARFTTRDE…ETRLEVEYTR (83 aa). WD repeat units lie at residues 119-158, 165-203, and 210-249; these read SRAG…LATS, GRIT…RTIT, and SHRW…NPVA. The tract at residues 245–274 is disordered; the sequence is ENPVAPSSLLPNSTAASNKRQKLSKPDRTV. A compositionally biased stretch (polar residues) spans 253-262; sequence LLPNSTAASN. WD repeat units lie at residues 285 to 325, 327 to 366, 372 to 412, and 436 to 471; these read GHSS…CVDT, TTGH…TQIS, GHKN…TGGQ, and GHGE…ALGS. A disordered region spans residues 412 to 440; sequence QVGEGQQGESVHTIHRQGQSGPGKGHGEG.

This sequence belongs to the WD repeat WDR12/YTM1 family. In terms of assembly, component of the NOP7 complex, composed of ERB1, NOP7 and YTM1. The complex is held together by ERB1, which interacts with NOP7 via its N-terminal domain and with YTM1 via a high-affinity interaction between the seven-bladed beta-propeller domains of the 2 proteins. The NOP7 complex associates with the 66S pre-ribosome. Interacts (via UBL domain) with MDN1 (via VWFA/MIDAS domain).

It is found in the nucleus. The protein resides in the nucleolus. Its subcellular location is the nucleoplasm. In terms of biological role, component of the NOP7 complex, which is required for maturation of the 25S and 5.8S ribosomal RNAs and formation of the 60S ribosome. In Phaeosphaeria nodorum (strain SN15 / ATCC MYA-4574 / FGSC 10173) (Glume blotch fungus), this protein is Ribosome biogenesis protein YTM1.